The following is a 967-amino-acid chain: Isoleucine--tRNA ligase (967 aa).

Positions 68-78 (PYANGTLHMGH) match the 'HIGH' region motif. L-isoleucyl-5'-AMP is bound at residue E583. The 'KMSKS' region motif lies at 624–628 (KMSKS). Position 627 (K627) interacts with ATP. The Zn(2+) site is built by C937, C940, C957, and C960.

This sequence belongs to the class-I aminoacyl-tRNA synthetase family. IleS type 1 subfamily. Monomer. Requires Zn(2+) as cofactor.

The protein localises to the cytoplasm. It catalyses the reaction tRNA(Ile) + L-isoleucine + ATP = L-isoleucyl-tRNA(Ile) + AMP + diphosphate. In terms of biological role, catalyzes the attachment of isoleucine to tRNA(Ile). As IleRS can inadvertently accommodate and process structurally similar amino acids such as valine, to avoid such errors it has two additional distinct tRNA(Ile)-dependent editing activities. One activity is designated as 'pretransfer' editing and involves the hydrolysis of activated Val-AMP. The other activity is designated 'posttransfer' editing and involves deacylation of mischarged Val-tRNA(Ile). The polypeptide is Isoleucine--tRNA ligase (Prochlorococcus marinus (strain NATL1A)).